The following is a 99-amino-acid chain: Acylphosphatase-2 (99 aa).

At Ser-2 the chain carries N-acetylserine. In terms of domain architecture, Acylphosphatase-like spans 9-99; the sequence is SVDYEVFGRV…LEYSNFSIRY (91 aa). Active-site residues include Arg-24 and Asn-42. Phosphoserine is present on Ser-93.

It belongs to the acylphosphatase family.

It catalyses the reaction an acyl phosphate + H2O = a carboxylate + phosphate + H(+). In terms of biological role, its physiological role is not yet clear. The chain is Acylphosphatase-2 (ACYP2) from Cavia porcellus (Guinea pig).